Here is a 354-residue protein sequence, read N- to C-terminus: Photosystem II protein D1 (354 aa).

Threonine 2 bears the N-acetylthreonine mark. At threonine 2 the chain carries Phosphothreonine. 3 helical membrane-spanning segments follow: residues 29–46 (YIGW…TATS), 118–133 (HFLL…EWEL), and 142–156 (WIAV…AATA). Histidine 118 provides a ligand contact to chlorophyll a. Tyrosine 126 contacts pheophytin a. The [CaMn4O5] cluster site is built by aspartate 170 and glutamate 189. Residues 197–218 (FHMLGVAGVFGGSLFSAMHGSL) traverse the membrane as a helical segment. A chlorophyll a-binding site is contributed by histidine 198. A quinone contacts are provided by residues histidine 215 and 264–265 (SF). Fe cation is bound at residue histidine 215. Histidine 272 serves as a coordination point for Fe cation. Residues 274–288 (FLAAWPVVGIWFTAL) traverse the membrane as a helical segment. [CaMn4O5] cluster is bound by residues histidine 332, glutamate 333, aspartate 342, and alanine 344. Residues 345–354 (ASIEAPSLNG) constitute a propeptide that is removed on maturation.

It belongs to the reaction center PufL/M/PsbA/D family. In terms of assembly, PSII is composed of 1 copy each of membrane proteins PsbA, PsbB, PsbC, PsbD, PsbE, PsbF, PsbH, PsbI, PsbJ, PsbK, PsbL, PsbM, PsbT, PsbX, PsbY, PsbZ, Psb30/Ycf12, at least 3 peripheral proteins of the oxygen-evolving complex and a large number of cofactors. It forms dimeric complexes. The D1/D2 heterodimer binds P680, chlorophylls that are the primary electron donor of PSII, and subsequent electron acceptors. It shares a non-heme iron and each subunit binds pheophytin, quinone, additional chlorophylls, carotenoids and lipids. D1 provides most of the ligands for the Mn4-Ca-O5 cluster of the oxygen-evolving complex (OEC). There is also a Cl(-1) ion associated with D1 and D2, which is required for oxygen evolution. The PSII complex binds additional chlorophylls, carotenoids and specific lipids. is required as a cofactor. Post-translationally, tyr-161 forms a radical intermediate that is referred to as redox-active TyrZ, YZ or Y-Z. C-terminally processed by CTPA; processing is essential to allow assembly of the oxygen-evolving complex and thus photosynthetic growth.

It localises to the plastid. The protein localises to the chloroplast thylakoid membrane. The enzyme catalyses 2 a plastoquinone + 4 hnu + 2 H2O = 2 a plastoquinol + O2. In terms of biological role, photosystem II (PSII) is a light-driven water:plastoquinone oxidoreductase that uses light energy to abstract electrons from H(2)O, generating O(2) and a proton gradient subsequently used for ATP formation. It consists of a core antenna complex that captures photons, and an electron transfer chain that converts photonic excitation into a charge separation. The D1/D2 (PsbA/PsbD) reaction center heterodimer binds P680, the primary electron donor of PSII as well as several subsequent electron acceptors. The sequence is that of Photosystem II protein D1 from Selaginella uncinata (Blue spike-moss).